The sequence spans 46 residues: Viscotoxin-A2 (46 aa).

Cystine bridges form between C3–C40, C4–C32, and C16–C26.

The protein belongs to the plant thionin (TC 1.C.44) family.

It localises to the secreted. Its function is as follows. Thionins are small plant proteins which are toxic to animal cells. They seem to exert their toxic effect at the level of the cell membrane. Their precise function is not known. In Viscum album (European mistletoe), this protein is Viscotoxin-A2 (THI2.3).